A 323-amino-acid polypeptide reads, in one-letter code: Aldo-keto reductase family 1 member C4 (323 aa).

NADP(+) is bound by residues 20–24 and Asp50; that span reads GFGTY. Catalysis depends on Tyr55, which acts as the Proton donor. His117 serves as a coordination point for substrate. Residues 166–167, Gln190, 216–221, and 270–280 contribute to the NADP(+) site; these read SN, HSALGT, and KSYNEQRIREN.

The protein belongs to the aldo/keto reductase family. As to quaternary structure, monomer. In terms of processing, the N-terminus is blocked. As to expression, liver specific.

It localises to the cytoplasm. The protein resides in the cytosol. The enzyme catalyses a 3alpha-hydroxysteroid + NADP(+) = a 3-oxosteroid + NADPH + H(+). It carries out the reaction a 3alpha-hydroxysteroid + NAD(+) = a 3-oxosteroid + NADH + H(+). It catalyses the reaction 5alpha-androstane-3alpha,17beta-diol + NADP(+) = 17beta-hydroxy-5alpha-androstan-3-one + NADPH + H(+). The catalysed reaction is 5alpha-androstane-3beta,17beta-diol + NADP(+) = 17beta-hydroxy-5alpha-androstan-3-one + NADPH + H(+). The enzyme catalyses 5alpha-androstane-3alpha,17beta-diol + NAD(+) = 17beta-hydroxy-5alpha-androstan-3-one + NADH + H(+). It carries out the reaction 17beta-estradiol + NADP(+) = estrone + NADPH + H(+). It catalyses the reaction 17beta-estradiol + NAD(+) = estrone + NADH + H(+). The catalysed reaction is (20S)-hydroxypregn-4-en-3-one + NADP(+) = progesterone + NADPH + H(+). The enzyme catalyses (20S)-hydroxypregn-4-en-3-one + NAD(+) = progesterone + NADH + H(+). It carries out the reaction androsterone + NADP(+) = 5alpha-androstan-3,17-dione + NADPH + H(+). It catalyses the reaction testosterone + NADP(+) = androst-4-ene-3,17-dione + NADPH + H(+). The catalysed reaction is testosterone + NAD(+) = androst-4-ene-3,17-dione + NADH + H(+). The enzyme catalyses 3alpha-hydroxy-5alpha-androstane 17-O-(beta-D-glucuronate) + NADP(+) = 5alpha-dihydrotestosterone 17-O-(beta-D-glucuronate) + NADPH + H(+). It carries out the reaction (3beta,5alpha,17beta)-3-hydroxy-androstan-17-yl sulfate + NADP(+) = 5alpha-dihydrotestosterone sulfate + NADPH + H(+). It catalyses the reaction 5alpha-androstane-3alpha,17beta-diol + NAD(+) = androsterone + NADH + H(+). The catalysed reaction is chlordecone alcohol + NADP(+) = chlordecone + NADPH + H(+). The protein operates within steroid metabolism. Its activity is regulated as follows. Inhibited by nonsteroidal the anti-inflammatory drugs (NSAID) flufenamic. The oxidation reaction is inhibited by low micromolar concentrations of NADPH. Its function is as follows. Cytosolic aldo-keto reductase that catalyzes the NADH and NADPH-dependent reduction of ketosteroids to hydroxysteroids. Liver specific enzyme that acts as an NAD(P)(H)-dependent 3-, 17- and 20-ketosteroid reductase on the steroid nucleus and side chain. Displays the ability to catalyze both oxidation and reduction in vitro, but most probably acts as a reductase in vivo since the oxidase activity measured in vitro is inhibited by physiological concentration of NADPH. Acts preferentially as a 3-alpha-hydroxysteroid dehydrogenase (HSD) with a subsidiary 3-beta-HSD activity. Catalyzes efficiently the transformation of the potent androgen 5-alpha-dihydrotestosterone (5alpha-DHT or 17beta-hydroxy-5alpha-androstan-3-one) into the less active form, 5-alpha-androstan-3-alpha,17-beta-diol (3-alpha-diol). Catalyzes the reduction of estrone into 17beta-estradiol but with low efficiency. Metabolizes a broad spectrum of natural and synthetic therapeutic steroid and plays an important role in metabolism of androgens, estrogens, progestereone and conjugated steroids. Catalyzes the biotransformation of the pesticide chlordecone (kepone) to its corresponding alcohol leading to increased biliary excretion of the pesticide and concomitant reduction of its neurotoxicity since bile is the major excretory route. In Homo sapiens (Human), this protein is Aldo-keto reductase family 1 member C4 (AKR1C4).